Reading from the N-terminus, the 92-residue chain is Kappa-scoloptoxin(15)-Ssd2a (92 aa).

Residues 1 to 20 form the signal peptide; sequence MKMVYLGLFLIITSCVISSG.

Post-translationally, contains 3 disulfide bonds. In terms of tissue distribution, expressed by the venom gland.

The protein resides in the secreted. Functionally, inhibits voltage-gated potassium channels (Kv) (IC(50)=about 10 nM), when tested on DRG neurons. This chain is Kappa-scoloptoxin(15)-Ssd2a, found in Scolopendra dehaani (Thai centipede).